Consider the following 160-residue polypeptide: 6,7-dimethyl-8-ribityllumazine synthase (160 aa).

5-amino-6-(D-ribitylamino)uracil contacts are provided by residues W31, 65-67 (SFE), and 89-91 (CVV). 94-95 (DT) serves as a coordination point for (2S)-2-hydroxy-3-oxobutyl phosphate. H97 functions as the Proton donor in the catalytic mechanism. 5-amino-6-(D-ribitylamino)uracil is bound at residue F122. Residue R136 coordinates (2S)-2-hydroxy-3-oxobutyl phosphate.

Belongs to the DMRL synthase family.

It catalyses the reaction (2S)-2-hydroxy-3-oxobutyl phosphate + 5-amino-6-(D-ribitylamino)uracil = 6,7-dimethyl-8-(1-D-ribityl)lumazine + phosphate + 2 H2O + H(+). Its pathway is cofactor biosynthesis; riboflavin biosynthesis; riboflavin from 2-hydroxy-3-oxobutyl phosphate and 5-amino-6-(D-ribitylamino)uracil: step 1/2. In terms of biological role, catalyzes the formation of 6,7-dimethyl-8-ribityllumazine by condensation of 5-amino-6-(D-ribitylamino)uracil with 3,4-dihydroxy-2-butanone 4-phosphate. This is the penultimate step in the biosynthesis of riboflavin. This is 6,7-dimethyl-8-ribityllumazine synthase from Parabacteroides distasonis (strain ATCC 8503 / DSM 20701 / CIP 104284 / JCM 5825 / NCTC 11152).